A 164-amino-acid chain; its full sequence is Ribosome maturation factor RimM (164 aa).

One can recognise a PRC barrel domain in the interval 92-164 (PDSEYYVANL…FVVIVPPEFI (73 aa)).

The protein belongs to the RimM family. Binds ribosomal protein uS19.

Its subcellular location is the cytoplasm. An accessory protein needed during the final step in the assembly of 30S ribosomal subunit, possibly for assembly of the head region. Essential for efficient processing of 16S rRNA. May be needed both before and after RbfA during the maturation of 16S rRNA. It has affinity for free ribosomal 30S subunits but not for 70S ribosomes. The sequence is that of Ribosome maturation factor RimM from Orientia tsutsugamushi (strain Ikeda) (Rickettsia tsutsugamushi).